Here is a 324-residue protein sequence, read N- to C-terminus: Adenine deaminase (324 aa).

Residues H8, H10, and H186 each contribute to the Zn(2+) site. Catalysis depends on E189, which acts as the Proton donor. A Zn(2+)-binding site is contributed by D267. Position 268 (D268) interacts with substrate.

The protein belongs to the metallo-dependent hydrolases superfamily. Adenosine and AMP deaminases family. Adenine deaminase type 2 subfamily. Zn(2+) serves as cofactor.

It catalyses the reaction adenine + H2O + H(+) = hypoxanthine + NH4(+). Catalyzes the hydrolytic deamination of adenine to hypoxanthine. Plays an important role in the purine salvage pathway and in nitrogen catabolism. In Mesorhizobium japonicum (strain LMG 29417 / CECT 9101 / MAFF 303099) (Mesorhizobium loti (strain MAFF 303099)), this protein is Adenine deaminase.